The chain runs to 134 residues: Ribosome-binding factor A (134 aa).

The protein belongs to the RbfA family. As to quaternary structure, monomer. Binds 30S ribosomal subunits, but not 50S ribosomal subunits or 70S ribosomes.

It is found in the cytoplasm. In terms of biological role, one of several proteins that assist in the late maturation steps of the functional core of the 30S ribosomal subunit. Associates with free 30S ribosomal subunits (but not with 30S subunits that are part of 70S ribosomes or polysomes). Required for efficient processing of 16S rRNA. May interact with the 5'-terminal helix region of 16S rRNA. The chain is Ribosome-binding factor A from Rhizobium etli (strain CIAT 652).